A 293-amino-acid chain; its full sequence is Probable E3 ubiquitin-protein ligase RNF144A-A (293 aa).

A TRIAD supradomain region spans residues proline 16–leucine 237. 14 residues coordinate Zn(2+): cysteine 20, cysteine 23, cysteine 43, cysteine 46, cysteine 111, cysteine 116, cysteine 135, cysteine 138, cysteine 143, cysteine 146, histidine 151, cysteine 156, cysteine 186, and cysteine 189. The RING-type 1 zinc finger occupies cysteine 20 to cysteine 70. An IBR-type zinc finger spans residues glutamine 91–cysteine 156. The RING-type 2; atypical zinc-finger motif lies at cysteine 186–cysteine 215. Cysteine 199 is an active-site residue. Residues cysteine 204, cysteine 207, cysteine 212, cysteine 215, histidine 227, and cysteine 233 each coordinate Zn(2+). Residues valine 251 to leucine 271 form a helical membrane-spanning segment.

It belongs to the RBR family. RNF144 subfamily.

It is found in the membrane. The catalysed reaction is [E2 ubiquitin-conjugating enzyme]-S-ubiquitinyl-L-cysteine + [acceptor protein]-L-lysine = [E2 ubiquitin-conjugating enzyme]-L-cysteine + [acceptor protein]-N(6)-ubiquitinyl-L-lysine.. The protein operates within protein modification; protein ubiquitination. Its function is as follows. E3 ubiquitin-protein ligase which accepts ubiquitin from E2 ubiquitin-conjugating enzymes ube2l3 and ube2l6 in the form of a thioester and then directly transfers the ubiquitin to targeted substrates. The protein is Probable E3 ubiquitin-protein ligase RNF144A-A (rnf144aa) of Danio rerio (Zebrafish).